We begin with the raw amino-acid sequence, 548 residues long: Sensor protein TdiS (548 aa).

The region spanning 20–89 (DPATGYEVIF…IGENYGHFFE (70 aa)) is the PAS 1 domain. Residues 94–145 (FKDERPIIRKDGSVIWCIVTGSLLDSSNPRLGSIWVVQDISEHKRTEDDLKA) form the PAC 1 domain. In terms of domain architecture, PAS 2 spans 185 to 256 (HREKYEKLFH…RKRLPWRIHD (72 aa)). Residues 263–314 (KNIEIGMREEESRKQRWLSVSSSLLELKGQKMVVAAFTDITYRKRIEELERL) form the PAC 2 domain. The Histidine kinase domain maps to 334–548 (ALAHQMGQPL…GSKFQFTLPI (215 aa)). A Phosphohistidine; by autocatalysis modification is found at histidine 337.

Post-translationally, autophosphorylated.

It carries out the reaction ATP + protein L-histidine = ADP + protein N-phospho-L-histidine.. Member of the two-component regulatory system TdiR/TdiS, which probably regulates transcription of toluene catabolic genes (bss operon). May activate TdiR by phosphorylation. The polypeptide is Sensor protein TdiS (tdiS) (Thauera aromatica).